An 882-amino-acid polypeptide reads, in one-letter code: Leucine--tRNA ligase (882 aa).

Residues 43 to 53 (PYPSGNLHMGH) carry the 'HIGH' region motif. A 'KMSKS' region motif is present at residues 632 to 636 (TMSKS). Lys-635 serves as a coordination point for ATP.

Belongs to the class-I aminoacyl-tRNA synthetase family.

It is found in the cytoplasm. The catalysed reaction is tRNA(Leu) + L-leucine + ATP = L-leucyl-tRNA(Leu) + AMP + diphosphate. The polypeptide is Leucine--tRNA ligase (Synechococcus sp. (strain JA-2-3B'a(2-13)) (Cyanobacteria bacterium Yellowstone B-Prime)).